A 354-amino-acid chain; its full sequence is Uroporphyrinogen decarboxylase (354 aa).

Residues 27-31 (RQAGR), Asp-77, Tyr-154, Ser-209, and His-327 contribute to the substrate site.

It belongs to the uroporphyrinogen decarboxylase family. Homodimer.

It localises to the cytoplasm. The catalysed reaction is uroporphyrinogen III + 4 H(+) = coproporphyrinogen III + 4 CO2. The protein operates within porphyrin-containing compound metabolism; protoporphyrin-IX biosynthesis; coproporphyrinogen-III from 5-aminolevulinate: step 4/4. Catalyzes the decarboxylation of four acetate groups of uroporphyrinogen-III to yield coproporphyrinogen-III. The sequence is that of Uroporphyrinogen decarboxylase from Teredinibacter turnerae (strain ATCC 39867 / T7901).